Consider the following 204-residue polypeptide: Lysozyme g (204 aa).

The first 19 residues, 1-19 (MHLMLVLLGLAALLGTSQS), serve as a signal peptide directing secretion. 2 disulfide bridges follow: Cys-23/Cys-79 and Cys-37/Cys-48. Residues Glu-92 and Asp-105 contribute to the active site.

The protein belongs to the glycosyl hydrolase 23 family.

It localises to the secreted. The catalysed reaction is Hydrolysis of (1-&gt;4)-beta-linkages between N-acetylmuramic acid and N-acetyl-D-glucosamine residues in a peptidoglycan and between N-acetyl-D-glucosamine residues in chitodextrins.. Has bacteriolytic activity against M.luteus. In Struthio camelus (Common ostrich), this protein is Lysozyme g.